We begin with the raw amino-acid sequence, 438 residues long: 3-phosphoshikimate 1-carboxyvinyltransferase (438 aa).

3-phosphoshikimate-binding residues include K23, S24, and R28. K23 is a phosphoenolpyruvate binding site. Phosphoenolpyruvate is bound by residues G94 and R122. S167, Q169, D321, and K348 together coordinate 3-phosphoshikimate. Q169 is a phosphoenolpyruvate binding site. Residue D321 is the Proton acceptor of the active site. Phosphoenolpyruvate is bound by residues R352 and R393.

Belongs to the EPSP synthase family. Monomer.

Its subcellular location is the cytoplasm. It catalyses the reaction 3-phosphoshikimate + phosphoenolpyruvate = 5-O-(1-carboxyvinyl)-3-phosphoshikimate + phosphate. The protein operates within metabolic intermediate biosynthesis; chorismate biosynthesis; chorismate from D-erythrose 4-phosphate and phosphoenolpyruvate: step 6/7. Its function is as follows. Catalyzes the transfer of the enolpyruvyl moiety of phosphoenolpyruvate (PEP) to the 5-hydroxyl of shikimate-3-phosphate (S3P) to produce enolpyruvyl shikimate-3-phosphate and inorganic phosphate. In Helicobacter hepaticus (strain ATCC 51449 / 3B1), this protein is 3-phosphoshikimate 1-carboxyvinyltransferase.